The primary structure comprises 296 residues: MNQSEVEIVIITGMSGAGKSVAVRSFEDLGYYCIDNLPPVLLPKFIELIEGGIDKVTKVALVMDLRGQSFFDELFKAIDELNETPASRLKIQILYLDAKDSKLVQRYKETRRTHPLAKGGLPLEGIQKERNLLEEIKGRAQQIIDTTELKPLQLREKIMQRFAGNDRQAFAVHFVSFGFKYGIPIDADLVFDVRFLPNPHYVEDLRPKTGLQTEVSSYVLKWKETKQFVEKLTDLFDFMLPHYKREGKSQVVIGIGCTGGQHRSVTLAEYFCAHYEAKYDAYTSHRDINKRKANSR.

13–20 (GMSGAGKS) lines the ATP pocket. 64–67 (DLRG) is a binding site for GTP.

This sequence belongs to the RapZ-like family.

Functionally, displays ATPase and GTPase activities. The chain is Nucleotide-binding protein ABC3036 from Shouchella clausii (strain KSM-K16) (Alkalihalobacillus clausii).